Here is a 244-residue protein sequence, read N- to C-terminus: MNLIINDKTASSSVGQTIGKAARLNHAHVGYVCGGHGLCQACYITVQEGADCLAPLTDVEKAFLSPRQIAAGGRIACQATIAKEGTVKVLSRPEEVRRMVFSNPFQLIGYAADMGKDTAQQIVPGVQNLIGRIQRGEMGGKDALGDMIESIQGAAGLVVEAIQQGPMALPIPFKEQIADLISKLPLPQIQLPSISLPQLPSISFPQLPFSLPKLPFSLPFLPQQPQATASLEKVTITVQPPAKD.

The region spanning 1-95 (MNLIINDKTA…TVKVLSRPEE (95 aa)) is the 2Fe-2S ferredoxin-type domain. [2Fe-2S] cluster contacts are provided by C33, C39, C42, and C77.

[2Fe-2S] cluster is required as a cofactor.

It is found in the chlorosome. Functionally, could play a direct role in the oxidation or reduction of the quenching species formed in the chlorosome. The sequence is that of Chlorosome protein I (csmI) from Chlorobaculum tepidum (strain ATCC 49652 / DSM 12025 / NBRC 103806 / TLS) (Chlorobium tepidum).